Reading from the N-terminus, the 341-residue chain is NADH-quinone oxidoreductase subunit H 1 (341 aa).

The next 8 helical transmembrane spans lie at 13-33 (LVVI…IAYI), 82-102 (GVFL…WAVI), 115-135 (VGVL…IMAG), 161-181 (IGFV…TAIV), 190-210 (LLGW…VSAL), 248-268 (YVAI…GWLP), 277-297 (WVPG…LFAM), and 317-337 (VFLP…QFAG).

Belongs to the complex I subunit 1 family. In terms of assembly, NDH-1 is composed of 14 different subunits. Subunits NuoA, H, J, K, L, M, N constitute the membrane sector of the complex.

Its subcellular location is the cell inner membrane. It carries out the reaction a quinone + NADH + 5 H(+)(in) = a quinol + NAD(+) + 4 H(+)(out). In terms of biological role, NDH-1 shuttles electrons from NADH, via FMN and iron-sulfur (Fe-S) centers, to quinones in the respiratory chain. The immediate electron acceptor for the enzyme in this species is believed to be ubiquinone. Couples the redox reaction to proton translocation (for every two electrons transferred, four hydrogen ions are translocated across the cytoplasmic membrane), and thus conserves the redox energy in a proton gradient. This subunit may bind ubiquinone. The sequence is that of NADH-quinone oxidoreductase subunit H 1 from Rhodopseudomonas palustris (strain BisB18).